Reading from the N-terminus, the 670-residue chain is Beta-fructofuranosidase 1 (670 aa).

The interval 1–40 is disordered; sequence MIPAVADPTTLDGGGARRPLLPETDPRGRAAAGAEQKRPP. Topologically, residues 1–44 are cytoplasmic; that stretch reads MIPAVADPTTLDGGGARRPLLPETDPRGRAAAGAEQKRPPATPT. A propeptide spans 1–112 (removed in mature form); sequence MIPAVADPTT…APLLGSGALQ (112 aa). The helical; Signal-anchor for type II membrane protein transmembrane segment at 45 to 65 threads the bilayer; it reads VLTAVVSAVLLLVLVAVTVLA. The Lumenal portion of the chain corresponds to 66–670; the sequence is SQHVDGQAGG…RPYPATTTSL (605 aa). Residues 136-139, Gln155, and Trp163 each bind substrate; that span reads WMND. Residue Asp139 is part of the active site. N-linked (GlcNAc...) asparagine glycosylation occurs at Asn165. Residues 198-199 and 263-264 each bind substrate; these read WS and RD. N-linked (GlcNAc...) asparagine glycosylation occurs at Asn275. Substrate is bound by residues Glu322 and Asp362. Residue Asn518 is glycosylated (N-linked (GlcNAc...) asparagine). A disulfide bond links Cys519 and Cys567. Residues Asn595 and Asn639 are each glycosylated (N-linked (GlcNAc...) asparagine).

The protein belongs to the glycosyl hydrolase 32 family. May be present in two forms, a 70 kDa monomer and a heterodimer of the 30 kDa and 38 kDa subunits. The ratio of the levels of the two forms within cells appears to be regulated developmentally.

The protein localises to the membrane. Its subcellular location is the vacuole lumen. It catalyses the reaction Hydrolysis of terminal non-reducing beta-D-fructofuranoside residues in beta-D-fructofuranosides.. It functions in the pathway glycan biosynthesis; sucrose metabolism. This Zea mays (Maize) protein is Beta-fructofuranosidase 1 (IVR1).